Reading from the N-terminus, the 477-residue chain is Dihydrolipoyl dehydrogenase 3 (477 aa).

FAD contacts are provided by residues 39–47, K56, and A118; that span reads EKGEYGGAC. The cysteines at positions 47 and 52 are disulfide-linked. Residues 186-190, E209, and 279-282 contribute to the NAD(+) site; these read GAGYI and AVGR. FAD contacts are provided by D322 and A330. H454 functions as the Proton acceptor in the catalytic mechanism.

This sequence belongs to the class-I pyridine nucleotide-disulfide oxidoreductase family. Homodimer. It depends on FAD as a cofactor.

It localises to the cytoplasm. The catalysed reaction is N(6)-[(R)-dihydrolipoyl]-L-lysyl-[protein] + NAD(+) = N(6)-[(R)-lipoyl]-L-lysyl-[protein] + NADH + H(+). In Haloarcula marismortui (strain ATCC 43049 / DSM 3752 / JCM 8966 / VKM B-1809) (Halobacterium marismortui), this protein is Dihydrolipoyl dehydrogenase 3 (lpdA3).